A 355-amino-acid polypeptide reads, in one-letter code: MTKLENDTFIRALLRQPVDYTPVWMMRQAGRYLPEYNQTRARAGSFLSLCKNPDFATEVTLQPLARFSLDAAILFSDILTIPDAMGLGLYFADGEGPRFERPLREEREIRSLIVPDPDTHLRYVTDAVRQIRTALNNRVPLIGFSGSPFTLACYMVEGAGSSEFRQIKTMLYARPDLLHHILGVTAQAVTAYLNAQIEAGAQAVMIFDSWGGALSHAAYQEFSLRYMNQILDGLKREHNGDRIPNILFTKGGGLWLESIMASGCDAIGLDWTIDIGEARRRTQDKVALQGNLDPAVLFSSPEVIAAEAGKILASYGHGHGHVFNLGHGISQFTPPENALALIEAVHAQSVRYHTD.

Substrate contacts are provided by residues 27–31, phenylalanine 46, aspartate 77, tyrosine 154, serine 209, and histidine 327; that span reads RQAGR.

It belongs to the uroporphyrinogen decarboxylase family. In terms of assembly, homodimer.

The protein localises to the cytoplasm. It catalyses the reaction uroporphyrinogen III + 4 H(+) = coproporphyrinogen III + 4 CO2. Its pathway is porphyrin-containing compound metabolism; protoporphyrin-IX biosynthesis; coproporphyrinogen-III from 5-aminolevulinate: step 4/4. Catalyzes the decarboxylation of four acetate groups of uroporphyrinogen-III to yield coproporphyrinogen-III. The protein is Uroporphyrinogen decarboxylase of Nitrosomonas europaea (strain ATCC 19718 / CIP 103999 / KCTC 2705 / NBRC 14298).